Consider the following 448-residue polypeptide: Pentatricopeptide repeat-containing protein At1g80550, mitochondrial (448 aa).

The N-terminal 21 residues, 1 to 21, are a transit peptide targeting the mitochondrion; the sequence is MLLLRRLNRVRIASPYSVRLL. 10 PPR repeats span residues 80–110, 116–146, 150–186, 188–222, 223–257, 258–292, 293–327, 331–359, 360–394, and 395–429; these read TTET…MIGN, NHVT…LDDF, DETS…GFSV, NTKI…GVTK, DLFS…RMKL, DVVA…GCEP, NVAT…GCQP, TYMC…GVRP, KMDT…GDTP, and DSAA…GLSP.

Belongs to the PPR family. P subfamily.

It localises to the mitochondrion. This Arabidopsis thaliana (Mouse-ear cress) protein is Pentatricopeptide repeat-containing protein At1g80550, mitochondrial.